The chain runs to 241 residues: Methylthioribulose-1-phosphate dehydratase (241 aa).

Cys96 is a substrate binding site. His114 and His116 together coordinate Zn(2+). Glu138 acts as the Proton donor/acceptor in catalysis. Zn(2+) is bound at residue His194.

It belongs to the aldolase class II family. MtnB subfamily. Homotetramer. Interacts with APAF1. May interact with CASP1. The cofactor is Zn(2+). Expressed in skeletal muscle (at protein level).

Its subcellular location is the cytoplasm. The catalysed reaction is 5-(methylsulfanyl)-D-ribulose 1-phosphate = 5-methylsulfanyl-2,3-dioxopentyl phosphate + H2O. The protein operates within amino-acid biosynthesis; L-methionine biosynthesis via salvage pathway; L-methionine from S-methyl-5-thio-alpha-D-ribose 1-phosphate: step 2/6. Catalyzes the dehydration of methylthioribulose-1-phosphate (MTRu-1-P) into 2,3-diketo-5-methylthiopentyl-1-phosphate (DK-MTP-1-P). Functions in the methionine salvage pathway, which plays a key role in cancer, apoptosis, microbial proliferation and inflammation. May inhibit the CASP1-related inflammatory response (pyroptosis), the CASP9-dependent apoptotic pathway and the cytochrome c-dependent and APAF1-mediated cell death. The protein is Methylthioribulose-1-phosphate dehydratase of Mus musculus (Mouse).